We begin with the raw amino-acid sequence, 153 residues long: Regulatory protein RecX (153 aa).

Belongs to the RecX family.

Its subcellular location is the cytoplasm. Modulates RecA activity. This chain is Regulatory protein RecX, found in Neisseria meningitidis serogroup C / serotype 2a (strain ATCC 700532 / DSM 15464 / FAM18).